The sequence spans 681 residues: Nucleolar GTP-binding protein 1 (681 aa).

Residues 170-341 (RTLILCGFPN…LRDRACDELL (172 aa)) enclose the OBG-type G domain. Residues 176 to 183 (GFPNVGKS), 222 to 226 (DTPGI), and 290 to 293 (NKVD) each bind GTP.

It belongs to the TRAFAC class OBG-HflX-like GTPase superfamily. OBG GTPase family. NOG subfamily. In terms of tissue distribution, ubiquitously expressed.

Its subcellular location is the nucleus. It is found in the nucleolus. Involved in the biogenesis of the 60S ribosomal subunit. Has a role in regulating longevity, growth and brood size. May regulate fat storage via the insulin/IGF pathway. The sequence is that of Nucleolar GTP-binding protein 1 from Caenorhabditis elegans.